The sequence spans 30 residues: Glutathione S-transferase (30 aa).

The protein belongs to the GST superfamily. As to quaternary structure, monomer and homodimer.

The protein resides in the cytoplasm. The catalysed reaction is RX + glutathione = an S-substituted glutathione + a halide anion + H(+). Functionally, conjugation of reduced glutathione to a wide number of exogenous and endogenous hydrophobic electrophiles. In Pseudomonas fluorescens, this protein is Glutathione S-transferase.